A 349-amino-acid chain; its full sequence is Spermidine/putrescine import ATP-binding protein PotA (349 aa).

The 231-residue stretch at 7-237 (IELKGITKSY…PANSFVAKFI (231 aa)) folds into the ABC transporter domain. ATP is bound at residue 39–46 (GPSGCGKT).

The protein belongs to the ABC transporter superfamily. Spermidine/putrescine importer (TC 3.A.1.11.1) family. In terms of assembly, the complex is composed of two ATP-binding proteins (PotA), two transmembrane proteins (PotB and PotC) and a solute-binding protein (PotD).

The protein resides in the cell membrane. It carries out the reaction ATP + H2O + polyamine-[polyamine-binding protein]Side 1 = ADP + phosphate + polyamineSide 2 + [polyamine-binding protein]Side 1.. In terms of biological role, part of the ABC transporter complex PotABCD involved in spermidine/putrescine import. Responsible for energy coupling to the transport system. The sequence is that of Spermidine/putrescine import ATP-binding protein PotA from Clostridium perfringens (strain SM101 / Type A).